The following is a 281-amino-acid chain: sn-glycerol-3-phosphate transport system permease protein UgpE (281 aa).

6 helical membrane passes run 14-34 (IMLI…FVAA), 85-105 (FAIT…IVYF), 113-133 (FFWL…FPTI), 142-162 (LDSY…TFLF), 201-221 (AALF…PILI), and 247-267 (WNQV…VVLL). One can recognise an ABC transmembrane type-1 domain in the interval 77–268 (LLNSFVMAFA…IPPVVVVLLM (192 aa)).

Belongs to the binding-protein-dependent transport system permease family. UgpAE subfamily. As to quaternary structure, the complex is composed of two ATP-binding proteins (UgpC), two transmembrane proteins (UgpA and UgpE) and a solute-binding protein (UgpB).

The protein localises to the cell inner membrane. In terms of biological role, part of the ABC transporter complex UgpBAEC involved in sn-glycerol-3-phosphate (G3P) import. Probably responsible for the translocation of the substrate across the membrane. In Yersinia pestis bv. Antiqua (strain Antiqua), this protein is sn-glycerol-3-phosphate transport system permease protein UgpE (ugpE).